Here is a 370-residue protein sequence, read N- to C-terminus: Coiled-coil domain-containing protein 89 (370 aa).

The tract at residues 1–38 (MPQEESAPRMDTPSSEEPLDKQNRKLEDQEEEMGFKEL) is disordered. Threonine 12 is subject to Phosphothreonine. Residues 18–38 (PLDKQNRKLEDQEEEMGFKEL) are compositionally biased toward basic and acidic residues. Residues 19 to 346 (LDKQNRKLED…YDELRLQSEA (328 aa)) are a coiled coil.

The protein belongs to the CCDC89 family. In terms of assembly, interacts with HEY1.

The protein localises to the cytoplasm. The protein resides in the nucleus. The polypeptide is Coiled-coil domain-containing protein 89 (Bos taurus (Bovine)).